Consider the following 282-residue polypeptide: Bifunctional protein FolD (282 aa).

NADP(+) is bound by residues 166–168 and isoleucine 232; that span reads GAS.

Belongs to the tetrahydrofolate dehydrogenase/cyclohydrolase family. In terms of assembly, homodimer.

The catalysed reaction is (6R)-5,10-methylene-5,6,7,8-tetrahydrofolate + NADP(+) = (6R)-5,10-methenyltetrahydrofolate + NADPH. The enzyme catalyses (6R)-5,10-methenyltetrahydrofolate + H2O = (6R)-10-formyltetrahydrofolate + H(+). The protein operates within one-carbon metabolism; tetrahydrofolate interconversion. Catalyzes the oxidation of 5,10-methylenetetrahydrofolate to 5,10-methenyltetrahydrofolate and then the hydrolysis of 5,10-methenyltetrahydrofolate to 10-formyltetrahydrofolate. In Haemophilus influenzae (strain PittEE), this protein is Bifunctional protein FolD.